Consider the following 515-residue polypeptide: Proline--tRNA ligase (515 aa).

Belongs to the class-II aminoacyl-tRNA synthetase family. ProS type 3 subfamily. As to quaternary structure, homodimer.

It localises to the cytoplasm. It catalyses the reaction tRNA(Pro) + L-proline + ATP = L-prolyl-tRNA(Pro) + AMP + diphosphate. In terms of biological role, catalyzes the attachment of proline to tRNA(Pro) in a two-step reaction: proline is first activated by ATP to form Pro-AMP and then transferred to the acceptor end of tRNA(Pro). The sequence is that of Proline--tRNA ligase from Novosphingobium aromaticivorans (strain ATCC 700278 / DSM 12444 / CCUG 56034 / CIP 105152 / NBRC 16084 / F199).